The chain runs to 249 residues: 4-hydroxy-tetrahydrodipicolinate reductase (249 aa).

Residues aspartate 32, 74 to 76 (GTT), and 99 to 102 (SANY) contribute to the NAD(+) site. Histidine 134 (proton donor/acceptor) is an active-site residue. (S)-2,3,4,5-tetrahydrodipicolinate is bound at residue histidine 135. Lysine 138 acts as the Proton donor in catalysis. 144–145 (GT) contacts (S)-2,3,4,5-tetrahydrodipicolinate.

Belongs to the DapB family.

The protein localises to the cytoplasm. It carries out the reaction (S)-2,3,4,5-tetrahydrodipicolinate + NAD(+) + H2O = (2S,4S)-4-hydroxy-2,3,4,5-tetrahydrodipicolinate + NADH + H(+). The enzyme catalyses (S)-2,3,4,5-tetrahydrodipicolinate + NADP(+) + H2O = (2S,4S)-4-hydroxy-2,3,4,5-tetrahydrodipicolinate + NADPH + H(+). Its pathway is amino-acid biosynthesis; L-lysine biosynthesis via DAP pathway; (S)-tetrahydrodipicolinate from L-aspartate: step 4/4. Its function is as follows. Catalyzes the conversion of 4-hydroxy-tetrahydrodipicolinate (HTPA) to tetrahydrodipicolinate. This is 4-hydroxy-tetrahydrodipicolinate reductase from Chlorobaculum tepidum (strain ATCC 49652 / DSM 12025 / NBRC 103806 / TLS) (Chlorobium tepidum).